The chain runs to 171 residues: Protein phosphatase 1 regulatory subunit 1A (171 aa).

Residue M1 is modified to N-acetylmethionine. The interval 1-171 (MEPDNSPRKI…PLDSQGASLV (171 aa)) is disordered. Positions 9 to 12 (KIQF) are essential for activity. Residues 19-29 (PHLDPEAAEQI) are compositionally biased toward basic and acidic residues. The residue at position 35 (T35) is a Phosphothreonine. The tract at residues 42-54 (TSDQSSPEIDEDR) is essential for activity. 4 positions are modified to phosphoserine: S43, S46, S47, and S67. A compositionally biased stretch (polar residues) spans 122–146 (GSASRPDTPGTAQKSAESNPKTQEQ). The interval 143–171 (TQEQCGVEPRTEDSSAHMLPLDSQGASLV) is interaction with PPP1R15A.

It belongs to the protein phosphatase inhibitor 1 family. In terms of assembly, interacts with PPP1R15A. Phosphorylation of Thr-35 is required for activity.

In terms of biological role, inhibitor of protein-phosphatase 1. This protein may be important in hormonal control of glycogen metabolism. Hormones that elevate intracellular cAMP increase I-1 activity in many tissues. I-1 activation may impose cAMP control over proteins that are not directly phosphorylated by PKA. Following a rise in intracellular calcium, I-1 is inactivated by calcineurin (or PP2B). Does not inhibit type-2 phosphatases. The polypeptide is Protein phosphatase 1 regulatory subunit 1A (Ppp1r1a) (Mus musculus (Mouse)).